The primary structure comprises 729 residues: Triadin (729 aa).

A disordered region spans residues 1–28 (MTEITAEGNASTTTTVIDSKNGSVPKSP). Over 1 to 47 (MTEITAEGNASTTTTVIDSKNGSVPKSPGKVLKRTVTEDIVTTFSSP) the chain is Cytoplasmic. Residues 8–24 (GNASTTTTVIDSKNGSV) are compositionally biased toward polar residues. The chain crosses the membrane as a helical span at residues 48–68 (AAWLLVIALIITWSAVAIVMF). Residues 69–729 (DLVDYKNFSA…NSPGQKQQGQ (661 aa)) lie on the Lumenal side of the membrane. Residue asparagine 75 is glycosylated (N-linked (GlcNAc...) asparagine). A compositionally biased stretch (acidic residues) spans 117 to 129 (EDEEDDDGDEDTD). 3 disordered regions span residues 117 to 265 (EDEE…EQKD), 281 to 682 (DLKP…PTKQ), and 705 to 729 (PFTP…QQGQ). Composition is skewed to basic and acidic residues over residues 130–265 (KGEI…EQKD), 309–357 (LEEK…KASE), 371–433 (AKKD…KEEI), 444–509 (GKKE…EVKP), 516–531 (GKKE…KEAK), 538–562 (VQIH…EKVL), 580–598 (KKAE…DKPK), and 609–674 (ESGK…KEGT). Asparagine 647 is a glycosylation site (N-linked (GlcNAc...) asparagine). Residues 715–729 (SSGQANSPGQKQQGQ) are compositionally biased toward polar residues.

In terms of assembly, homooligomer of variable subunit number; disulfide-linked. Interacts with CASQ1 and RYR1 in skeletal muscle. Interacts with CASQ2. Phosphorylated by CaMK2. Post-translationally, N-glycosylated.

The protein localises to the cell membrane. The protein resides in the sarcoplasmic reticulum membrane. Contributes to the regulation of lumenal Ca2+ release via the sarcoplasmic reticulum calcium release channels RYR1 and RYR2, a key step in triggering skeletal and heart muscle contraction. Required for normal organization of the triad junction, where T-tubules and the sarcoplasmic reticulum terminal cisternae are in close contact. Required for normal skeletal muscle strength. Plays a role in excitation-contraction coupling in the heart and in regulating the rate of heart beats. The protein is Triadin (TRDN) of Homo sapiens (Human).